A 158-amino-acid polypeptide reads, in one-letter code: ATP synthase subunit b', chloroplastic (158 aa).

The helical transmembrane segment at 21–41 threads the bilayer; sequence GTLPLMALQFLILMLLLNTIF.

This sequence belongs to the ATPase B chain family. F-type ATPases have 2 components, F(1) - the catalytic core - and F(0) - the membrane proton channel. F(1) has five subunits: alpha(3), beta(3), gamma(1), delta(1), epsilon(1). F(0) has four main subunits: a(1), b(1), b'(1) and c(10-14). The alpha and beta chains form an alternating ring which encloses part of the gamma chain. F(1) is attached to F(0) by a central stalk formed by the gamma and epsilon chains, while a peripheral stalk is formed by the delta, b and b' chains.

It is found in the plastid. The protein resides in the chloroplast thylakoid membrane. In terms of biological role, f(1)F(0) ATP synthase produces ATP from ADP in the presence of a proton or sodium gradient. F-type ATPases consist of two structural domains, F(1) containing the extramembraneous catalytic core and F(0) containing the membrane proton channel, linked together by a central stalk and a peripheral stalk. During catalysis, ATP synthesis in the catalytic domain of F(1) is coupled via a rotary mechanism of the central stalk subunits to proton translocation. Its function is as follows. Component of the F(0) channel, it forms part of the peripheral stalk, linking F(1) to F(0). The b'-subunit is a diverged and duplicated form of b found in plants and photosynthetic bacteria. This is ATP synthase subunit b', chloroplastic from Porphyra purpurea (Red seaweed).